The following is a 207-amino-acid chain: Uracil phosphoribosyltransferase (207 aa).

Residues Arg77, Arg102, and 129–137 contribute to the 5-phospho-alpha-D-ribose 1-diphosphate site; that span reads DPMLATGGS. Uracil is bound by residues Ile192 and 197–199; that span reads GDA. Residue Asp198 participates in 5-phospho-alpha-D-ribose 1-diphosphate binding.

It belongs to the UPRTase family. It depends on Mg(2+) as a cofactor.

It catalyses the reaction UMP + diphosphate = 5-phospho-alpha-D-ribose 1-diphosphate + uracil. It participates in pyrimidine metabolism; UMP biosynthesis via salvage pathway; UMP from uracil: step 1/1. With respect to regulation, allosterically activated by GTP. Functionally, catalyzes the conversion of uracil and 5-phospho-alpha-D-ribose 1-diphosphate (PRPP) to UMP and diphosphate. The polypeptide is Uracil phosphoribosyltransferase (Ureaplasma parvum serovar 3 (strain ATCC 27815 / 27 / NCTC 11736)).